A 514-amino-acid polypeptide reads, in one-letter code: ATP synthase subunit alpha (514 aa).

170–177 provides a ligand contact to ATP; the sequence is GDRQIGKT.

The protein belongs to the ATPase alpha/beta chains family. As to quaternary structure, F-type ATPases have 2 components, CF(1) - the catalytic core - and CF(0) - the membrane proton channel. CF(1) has five subunits: alpha(3), beta(3), gamma(1), delta(1), epsilon(1). CF(0) has three main subunits: a(1), b(2) and c(9-12). The alpha and beta chains form an alternating ring which encloses part of the gamma chain. CF(1) is attached to CF(0) by a central stalk formed by the gamma and epsilon chains, while a peripheral stalk is formed by the delta and b chains.

It is found in the cell inner membrane. It catalyses the reaction ATP + H2O + 4 H(+)(in) = ADP + phosphate + 5 H(+)(out). Its function is as follows. Produces ATP from ADP in the presence of a proton gradient across the membrane. The alpha chain is a regulatory subunit. The sequence is that of ATP synthase subunit alpha from Pseudomonas entomophila (strain L48).